A 564-amino-acid chain; its full sequence is MQSSTESDRDIQDGPDADIHVAPPVEKEWSDGFDDNEVINGDNVEPPKRGLIGYLVIYLLCYPISFGGFLPGWDSGITAGFINMDNFKMNFGSYKHSTGEYYLSNVRMGLLVAMFSIGCAIGGLIFARLADTLGRRLAIVIVVLVYMVGAIIQISSNHKWYQYFVGKIIYGLGAGGCSVLCPMLLSEIAPTDLRGGLVSLYQLNMTFGIFLGYCSVYGTRKYDNTAQWRVPLGLCFLWTLIIIIGMLLVPESPRYLIECERHEEARASIAKINKVSPEDPWVLKQADEINAGVLAQRELGEASWKELFSVKTKVLQRLITGILVQTFLQLTGENYFFFYGTTIFKSVGLTDGFETSIVLGTVNFFSTIIAVMVVDKIGRRKCLLFGAAGMMACMVIFASIGVKCLYPHGQDGPSSKGAGNAMIVFTCFYIFCFATTWAPVAYIVVAESFPSKVKSRAMSISTACNWLWQFLIGFFTPFITGSIHFYYGYVFVGCLVAMFLYVFFFLPETIGLSLEEIQLLYEEGIKPWKSASWVPPSRRGIPSEESKTEKKDWKKFLKFSKGSD.

Positions 1–12 (MQSSTESDRDIQ) are enriched in basic and acidic residues. The interval 1-22 (MQSSTESDRDIQDGPDADIHVA) is disordered. Residues 1–52 (MQSSTESDRDIQDGPDADIHVAPPVEKEWSDGFDDNEVINGDNVEPPKRGLI) are Cytoplasmic-facing. Residues 53-73 (GYLVIYLLCYPISFGGFLPGW) form a helical membrane-spanning segment. Over 74–109 (DSGITAGFINMDNFKMNFGSYKHSTGEYYLSNVRMG) the chain is Extracellular. A helical membrane pass occupies residues 110 to 130 (LLVAMFSIGCAIGGLIFARLA). Topologically, residues 131-136 (DTLGRR) are cytoplasmic. A helical transmembrane segment spans residues 137 to 157 (LAIVIVVLVYMVGAIIQISSN). Topologically, residues 158 to 167 (HKWYQYFVGK) are extracellular. A helical transmembrane segment spans residues 168 to 188 (IIYGLGAGGCSVLCPMLLSEI). Over 189 to 194 (APTDLR) the chain is Cytoplasmic. Residues 195-215 (GGLVSLYQLNMTFGIFLGYCS) traverse the membrane as a helical segment. Over 216 to 229 (VYGTRKYDNTAQWR) the chain is Extracellular. A helical transmembrane segment spans residues 230–250 (VPLGLCFLWTLIIIIGMLLVP). Topologically, residues 251–333 (ESPRYLIECE…VQTFLQLTGE (83 aa)) are cytoplasmic. The helical transmembrane segment at 334 to 350 (NYFFFYGTTIFKSVGLT) threads the bilayer. Residues 351–356 (DGFETS) lie on the Extracellular side of the membrane. A helical membrane pass occupies residues 357 to 374 (IVLGTVNFFSTIIAVMVV). Over 375-381 (DKIGRRK) the chain is Cytoplasmic. The helical transmembrane segment at 382–402 (CLLFGAAGMMACMVIFASIGV) threads the bilayer. Residues 403–424 (KCLYPHGQDGPSSKGAGNAMIV) are Extracellular-facing. The helical transmembrane segment at 425–445 (FTCFYIFCFATTWAPVAYIVV) threads the bilayer. At 446–462 (AESFPSKVKSRAMSIST) the chain is on the cytoplasmic side. A helical transmembrane segment spans residues 463–483 (ACNWLWQFLIGFFTPFITGSI). Residue His484 is a topological domain, extracellular. A helical transmembrane segment spans residues 485–505 (FYYGYVFVGCLVAMFLYVFFF). Topologically, residues 506–564 (LPETIGLSLEEIQLLYEEGIKPWKSASWVPPSRRGIPSEESKTEKKDWKKFLKFSKGSD) are cytoplasmic.

The protein belongs to the major facilitator superfamily. Sugar transporter (TC 2.A.1.1) family.

It localises to the membrane. In terms of biological role, probable glucose transporter. The chain is Hexose transporter HXT17 (HXT17) from Saccharomyces cerevisiae (strain ATCC 204508 / S288c) (Baker's yeast).